The following is a 238-amino-acid chain: Probable transcriptional regulatory protein SAK_1658 (238 aa).

The protein belongs to the TACO1 family. YeeN subfamily.

The protein localises to the cytoplasm. The polypeptide is Probable transcriptional regulatory protein SAK_1658 (Streptococcus agalactiae serotype Ia (strain ATCC 27591 / A909 / CDC SS700)).